The chain runs to 456 residues: Heme sensor protein HssS (456 aa).

2 helical membrane passes run 9-29 (IAIY…LFAN) and 164-184 (TFLA…VIAS). One can recognise an HAMP domain in the interval 186–238 (YSIIKPIKILKQATERLMHGDFNSPIYQSRHDEIGTLQYRFEAMRQSLKQVDD). The region spanning 246 to 456 (NVSHEIKTPL…TFTVTLPETN (211 aa)) is the Histidine kinase domain. His249 carries the phosphohistidine; by autocatalysis modification.

Post-translationally, autophosphorylated.

The protein resides in the cell membrane. It catalyses the reaction ATP + protein L-histidine = ADP + protein N-phospho-L-histidine.. In terms of biological role, member of the two-component regulatory system HssS/HssR involved in intracellular heme homeostasis and tempering of staphylococcal virulence. HssS functions as a heme sensor histidine kinase which is autophosphorylated at a histidine residue and transfers its phosphate group to an aspartate residue of HssR. HssR/HssS activates the expression of hrtAB, an efflux pump, in response to extracellular heme, hemin, hemoglobin or blood. In Staphylococcus haemolyticus (strain JCSC1435), this protein is Heme sensor protein HssS (hssS).